Reading from the N-terminus, the 634-residue chain is Putative lipase atg15 (634 aa).

At 1-4 (MSIS) the chain is on the cytoplasmic side. The helical; Signal-anchor for type II membrane protein transmembrane segment at 5 to 25 (GLLLSVALLPSVVSAHDHVYF) threads the bilayer. At 26–634 (DPPSSGSPFL…CVGSTGTELR (609 aa)) the chain is on the lumenal side. N150, N185, N207, N265, and N289 each carry an N-linked (GlcNAc...) asparagine glycan. Residue S305 is the Charge relay system of the active site. N-linked (GlcNAc...) asparagine glycosylation is present at N451. A disordered region spans residues 518 to 544 (PTTTTEATPAPSVTTTIPTPTTYPTSS).

This sequence belongs to the AB hydrolase superfamily. Lipase family. In terms of assembly, binds to both phosphatidylinositol (PI) and phosphatidylinositol 3,5-bisphosphate (PIP2).

The protein localises to the endosome. It is found in the multivesicular body membrane. The protein resides in the prevacuolar compartment membrane. It carries out the reaction a triacylglycerol + H2O = a diacylglycerol + a fatty acid + H(+). Lipase which is essential for lysis of subvacuolar cytoplasm to vacuole targeted bodies and intravacuolar autophagic bodies. Involved in the lysis of intravacuolar multivesicular body (MVB) vesicles. The intravacuolar membrane disintegration by atg15 is critical to life span extension. This chain is Putative lipase atg15 (atg15), found in Neosartorya fischeri (strain ATCC 1020 / DSM 3700 / CBS 544.65 / FGSC A1164 / JCM 1740 / NRRL 181 / WB 181) (Aspergillus fischerianus).